Consider the following 540-residue polypeptide: Flavin-dependent halogenase ptaM (540 aa).

A signal peptide spans 1–21; that stretch reads MSVPAQTSVLIVGGGPAGSYA. Residues G14, A17, and E47 each contribute to the FAD site. 4 N-linked (GlcNAc...) asparagine glycosylation sites follow: N159, N192, N204, and N243. Chloride-binding residues include S330 and G331. N-linked (GlcNAc...) asparagine glycosylation is found at N480, N491, and N523.

Belongs to the flavin-dependent halogenase family.

Its pathway is secondary metabolite biosynthesis. Its function is as follows. Flavin-dependent halogenase; part of the gene cluster that mediates the biosynthesis of pestheic acid, a diphenyl ether which is a biosynthetic precursor of the unique chloropupukeananes. The biosynthesis initiates from condensation of acetate and malonate units catalyzed by the non-reducing PKS ptaA. As the ptaA protein is TE/CLC domain-deficient, hydrolysis and Claisen cyclization of the polyketide could be catalyzed by ptaB containing a beta-lactamase domain. The ptaB protein might hydrolyze the thioester bond between the ACP of ptaA and the intermediate to release atrochrysone carboxylic acid, which is spontaneously dehydrated to form endocrocin anthrone. Endocrocin anthrone is then converted to endocrocin, catalyzed by the anthrone oxygenase ptaC. Spontaneous decarboxylation of endocrocin occurs to generate emodin. An O-methyltransferase (ptaH or ptaI) could methylate emodin to form physcion. PtaJ could then catalyze the oxidative cleavage of physcion, and rotation of the intermediate could then afford desmethylisosulochrin. PtaF, a putative NADH-dependent oxidoreductase, might also participate in the oxidative cleavage step. Desmethylisosulochrin is then transformed by another O-methyltransferase (ptaH or ptaI) to form isosulochrin. Chlorination of isosulochrin by ptaM in the cyclohexadienone B ring then produces chloroisosulochrin. PtaE is responsible for the oxidative coupling reactions of both benzophenones isosulochrin and chloroisosulochrin to RES-1214-1 and pestheic acid respectively, regardless of chlorination. The polypeptide is Flavin-dependent halogenase ptaM (Pestalotiopsis fici (strain W106-1 / CGMCC3.15140)).